Consider the following 269-residue polypeptide: Phosphatidylglycerol--prolipoprotein diacylglyceryl transferase (269 aa).

7 helical membrane-spanning segments follow: residues 17–37, 56–76, 92–112, 120–140, 174–194, 202–222, and 237–257; these read LKIH…WLLA, LVFW…VLFY, WKGG…ALWF, FFEL…AGRI, PSQL…LWLY, MAVS…VEFV, and LTMG…LIWL. Residue arginine 139 participates in a 1,2-diacyl-sn-glycero-3-phospho-(1'-sn-glycerol) binding.

This sequence belongs to the Lgt family.

It is found in the cell inner membrane. It catalyses the reaction L-cysteinyl-[prolipoprotein] + a 1,2-diacyl-sn-glycero-3-phospho-(1'-sn-glycerol) = an S-1,2-diacyl-sn-glyceryl-L-cysteinyl-[prolipoprotein] + sn-glycerol 1-phosphate + H(+). It functions in the pathway protein modification; lipoprotein biosynthesis (diacylglyceryl transfer). In terms of biological role, catalyzes the transfer of the diacylglyceryl group from phosphatidylglycerol to the sulfhydryl group of the N-terminal cysteine of a prolipoprotein, the first step in the formation of mature lipoproteins. The chain is Phosphatidylglycerol--prolipoprotein diacylglyceryl transferase from Pseudomonas entomophila (strain L48).